The chain runs to 231 residues: NADH-quinone oxidoreductase subunit C (231 aa).

The protein belongs to the complex I 30 kDa subunit family. NDH-1 is composed of 14 different subunits. Subunits NuoB, C, D, E, F, and G constitute the peripheral sector of the complex.

Its subcellular location is the cell membrane. It carries out the reaction a quinone + NADH + 5 H(+)(in) = a quinol + NAD(+) + 4 H(+)(out). Functionally, NDH-1 shuttles electrons from NADH, via FMN and iron-sulfur (Fe-S) centers, to quinones in the respiratory chain. The immediate electron acceptor for the enzyme in this species is believed to be a menaquinone. Couples the redox reaction to proton translocation (for every two electrons transferred, four hydrogen ions are translocated across the cytoplasmic membrane), and thus conserves the redox energy in a proton gradient. The sequence is that of NADH-quinone oxidoreductase subunit C from Mycobacterium sp. (strain JLS).